Reading from the N-terminus, the 533-residue chain is Zinc finger protein 692 (533 aa).

2 disordered regions span residues Ser124–Leu251 and Thr290–Glu310. The segment covering Glu149 to Pro178 has biased composition (basic and acidic residues). The segment covering Gln190–Leu208 has biased composition (acidic residues). At Ser233 the chain carries Phosphoserine. Positions Thr290–Asn305 are enriched in polar residues. 5 C2H2-type zinc fingers span residues Met329–His354, Phe360–His384, Tyr390–His412, Leu418–His440, and Phe449–His472. Ser471 is subject to Phosphoserine. Residues Val478–Ser533 form a disordered region. The segment covering Ser481 to Ser492 has biased composition (low complexity). The segment covering Pro500–Ser521 has biased composition (polar residues).

Belongs to the krueppel C2H2-type zinc-finger protein family. In terms of processing, phosphorylation at Ser-471 results in loss of DNA-binding activity.

It is found in the nucleus. Functionally, may act as an transcriptional repressor for PCK1 gene expression, in turns may participate in the hepatic gluconeogenesis regulation through the activated AMPK signaling pathway. This is Zinc finger protein 692 from Rattus norvegicus (Rat).